Reading from the N-terminus, the 166-residue chain is Glycine cleavage system H protein 3, mitochondrial (166 aa).

The N-terminal 35 residues, 1-35 (MALRMWASSTANALKLSSSASKSHLLPAFSISRCF), are a transit peptide targeting the mitochondrion. In terms of domain architecture, Lipoyl-binding spans 57-139 (VATIGITDHA…YEDGWMIKVK (83 aa)). K98 is modified (N6-lipoyllysine). S141 carries the post-translational modification Phosphoserine.

This sequence belongs to the GcvH family. The glycine cleavage system is composed of four proteins: P, T, L and H. It depends on (R)-lipoate as a cofactor. Post-translationally, S-nitrosylated and/or glutathionylated at unknown positions in response to nitric oxide.

It localises to the mitochondrion. Its activity is regulated as follows. Inhibited by harpin, S-nitrosoglutathione (GSNO), nitric oxide, N-ethylmaleimide and 5,5'-dithiobis-(2-nitrobenzoic acid). Its function is as follows. The glycine decarboxylase (GDC) or glycine cleavage system catalyzes the degradation of glycine. The H protein shuttles the methylamine group of glycine from the P protein to the T protein. The sequence is that of Glycine cleavage system H protein 3, mitochondrial (GDH3) from Arabidopsis thaliana (Mouse-ear cress).